The following is a 780-amino-acid chain: Alpha-xylosidase (780 aa).

N-linked (GlcNAc...) asparagine glycans are attached at residues asparagine 48, asparagine 84, asparagine 247, and asparagine 298. Residues aspartate 434 and glutamate 437 contribute to the active site. N-linked (GlcNAc...) asparagine glycosylation is present at asparagine 443. Catalysis depends on aspartate 501, which acts as the Proton donor. A glycan (N-linked (GlcNAc...) asparagine) is linked at asparagine 718.

Belongs to the glycosyl hydrolase 31 family.

It is found in the secreted. It carries out the reaction Hydrolysis of terminal, non-reducing alpha-D-xylose residues with release of alpha-D-xylose.. Catalyzes the liberation of alpha-xylose from the non-reducing terminal glucose of xyloglucan oligosaccharides. The polypeptide is Alpha-xylosidase (Emericella nidulans (strain FGSC A4 / ATCC 38163 / CBS 112.46 / NRRL 194 / M139) (Aspergillus nidulans)).